The chain runs to 566 residues: MTTKQWGITPPISTAPATEQENALNTALINELKNQNLFESPAESEKRVKVLDELQQITTEFVKKVSLAKHMNEKMANEAGGKIFTYGSYRLGVYGPGSDIDTLVVVPKHVSRDNFFQDLEPMLREREEVTDLAAVPDAYVPIIKFKFLGISIDLIFARLSVPRVPRDLELSDNNLLKGVEERCVLSLNGTRVTDQILQLVPNRAVFKHALRAIKFWAQRRAIYANVVGFPGGVAWAMMVARICQLYPNAVSSVIVAKFFRILHQWNWPQPILLKPIEDGPLQVRIWNPKLYPSDKAHRMPIITPAYPSMCATHNITLSTQTIILREMVRAGEIADQIMVKALPWSALFQKHDFFHRYKHYLTITAAAKTAEAQLKWAGLVESKLRHLVTRLELVDAIALAHPFNKGFDKVYNCSSEEEAQQVASGVTLEVAYESTDHEKLANDTVNEEKADNTESKADGSENGEKQIFPVYTTTCYIGLELEKKKGHPIKRLDISWPTQEFYELCKKWDKYDDTLMNVFIKNTKNTALPDEVFEPGEERPKATKKRSTADTAHSTEQLKRQKVSTA.

Residues 86–88 (YGS), 99–101 (DID), Asp-153, Lys-214, Tyr-223, and 232–233 (GV) each bind ATP. Asp-99, Asp-101, and Asp-153 together coordinate Mg(2+). Disordered stretches follow at residues 437–463 (HEKL…SENG) and 530–566 (DEVF…VSTA).

Belongs to the poly(A) polymerase family. It depends on Mg(2+) as a cofactor. The cofactor is Mn(2+).

It is found in the nucleus. It carries out the reaction RNA(n) + ATP = RNA(n)-3'-adenine ribonucleotide + diphosphate. Functionally, polymerase that creates the 3'-poly(A) tail of mRNA's. May acquire specificity through interaction with a cleavage and polyadenylation factor (CF I). In Schizosaccharomyces pombe (strain 972 / ATCC 24843) (Fission yeast), this protein is Poly(A) polymerase pla1 (pla1).